Here is a 284-residue protein sequence, read N- to C-terminus: Shikimate dehydrogenase (NADP(+)) (284 aa).

Shikimate contacts are provided by residues 23–25 and threonine 70; that span reads SLS. Lysine 74 functions as the Proton acceptor in the catalytic mechanism. NADP(+) is bound at residue glutamate 86. 2 residues coordinate shikimate: asparagine 95 and aspartate 111. NADP(+) contacts are provided by residues 135-139, 159-164, and alanine 227; these read GAGGA and NRTPGR. Residue tyrosine 229 participates in shikimate binding. Residue glycine 251 coordinates NADP(+).

It belongs to the shikimate dehydrogenase family. As to quaternary structure, homodimer.

The enzyme catalyses shikimate + NADP(+) = 3-dehydroshikimate + NADPH + H(+). Its pathway is metabolic intermediate biosynthesis; chorismate biosynthesis; chorismate from D-erythrose 4-phosphate and phosphoenolpyruvate: step 4/7. Its function is as follows. Involved in the biosynthesis of the chorismate, which leads to the biosynthesis of aromatic amino acids. Catalyzes the reversible NADPH linked reduction of 3-dehydroshikimate (DHSA) to yield shikimate (SA). In Rubrobacter xylanophilus (strain DSM 9941 / JCM 11954 / NBRC 16129 / PRD-1), this protein is Shikimate dehydrogenase (NADP(+)).